A 341-amino-acid chain; its full sequence is Abnormal cell lineage protein 44 (341 aa).

The N-terminal stretch at 1–21 is a signal peptide; it reads MRALYFRTTTLSTFFILCSLA. 11 disulfides stabilise this stretch: Cys-84–Cys-95, Cys-134–Cys-142, Cys-144–Cys-158, Cys-206–Cys-220, Cys-208–Cys-215, Cys-265–Cys-292, Cys-275–Cys-287, Cys-291–Cys-331, Cys-307–Cys-322, Cys-309–Cys-319, and Cys-314–Cys-315. A lipid anchor (O-palmitoleoyl serine; by mom-1) is attached at Ser-212. A glycan (N-linked (GlcNAc...) asparagine) is linked at Asn-279.

It belongs to the Wnt family. Post-translationally, palmitoleoylation is required for efficient binding to frizzled receptors. Depalmitoleoylation leads to Wnt signaling pathway inhibition.

It localises to the secreted. The protein localises to the extracellular space. The protein resides in the extracellular matrix. Functionally, ligand for members of the frizzled family of seven transmembrane receptors. Affects male tail development, vulval precursor cell specification and egg laying. Involved in morphogenesis by influencing polarity of asymmetric cell divisions of the B, U, and F cells in the male, and the T cell in males and hermaphrodites. Controls spindle orientation in B-gamma cell division during male copulatory spicule development. Involved in specification of the P7.p lineage during vulval development. Has a role in providing polarity and default lin-17 localization in axon development and positioning of neuromuscular synapses in DA9 regions by negatively regulating synaptogenesis. This is Abnormal cell lineage protein 44 from Caenorhabditis briggsae.